The following is a 331-amino-acid chain: MKQIVYVASPESQQIHVWQLSDAGALELLQTVEAPGQVQPMAIHPDRTHLYVGVRPAFGIVSYRIEADGTLQQAGMAPLPGSPTHISTDLQGRYLFSASYSGNCASVSPIGHDGVVVAPIQQIDGLTAPHSANIDPTNQLLLVPCLKEDRIRLFNLDLQGELTPHTQEAVTTASGAGPRHMAFHHNDKYAYCVNELDGTVDVFAISENGGKYTLVQTLDIMPADFNGTRWAADIHITPNGRFLYTSDRTASILTIFSVSEDGSTLSVVGYHPTEEQPRGFNIDHSGRFVISSGQKSGHIGVYEIDQASGKLTTLARYPVGKGPMWVSILAK.

This sequence belongs to the cycloisomerase 2 family.

The catalysed reaction is 6-phospho-D-glucono-1,5-lactone + H2O = 6-phospho-D-gluconate + H(+). It participates in carbohydrate degradation; pentose phosphate pathway; D-ribulose 5-phosphate from D-glucose 6-phosphate (oxidative stage): step 2/3. Functionally, catalyzes the hydrolysis of 6-phosphogluconolactone to 6-phosphogluconate. This chain is 6-phosphogluconolactonase, found in Serratia proteamaculans (strain 568).